The following is a 444-amino-acid chain: Putative F-box protein At1g64540 (444 aa).

In terms of domain architecture, F-box spans Arg-4–Glu-50.

This Arabidopsis thaliana (Mouse-ear cress) protein is Putative F-box protein At1g64540.